A 463-amino-acid chain; its full sequence is Elongation factor 1-alpha (463 aa).

A tr-type G domain is found at Lys-5–Thr-242. A G1 region spans residues Gly-14–Ser-21. Gly-14–Ser-21 lines the GTP pocket. The G2 stretch occupies residues Gly-70–Asp-74. The tract at residues Asp-91 to Gly-94 is G3. Residues Asp-91–His-95 and Asn-153–Asp-156 each bind GTP. Positions Asn-153 to Asp-156 are G4. Residues Ser-194–Trp-196 form a G5 region. 5-glutamyl glycerylphosphorylethanolamine occurs at positions 301 and 374.

The protein belongs to the TRAFAC class translation factor GTPase superfamily. Classic translation factor GTPase family. EF-Tu/EF-1A subfamily.

The protein localises to the cytoplasm. This protein promotes the GTP-dependent binding of aminoacyl-tRNA to the A-site of ribosomes during protein biosynthesis. The chain is Elongation factor 1-alpha from Bombyx mori (Silk moth).